The primary structure comprises 37 residues: Large ribosomal subunit protein bL36 (37 aa).

Belongs to the bacterial ribosomal protein bL36 family.

The sequence is that of Large ribosomal subunit protein bL36 from Alkalilimnicola ehrlichii (strain ATCC BAA-1101 / DSM 17681 / MLHE-1).